The following is a 71-amino-acid chain: DNA-directed RNA polymerase subunit epsilon (71 aa).

It belongs to the RNA polymerase subunit epsilon family. As to quaternary structure, RNAP is composed of a core of 2 alpha, a beta and a beta' subunit. The core is associated with a delta subunit, and at least one of epsilon or omega. When a sigma factor is associated with the core the holoenzyme is formed, which can initiate transcription.

It carries out the reaction RNA(n) + a ribonucleoside 5'-triphosphate = RNA(n+1) + diphosphate. A non-essential component of RNA polymerase (RNAP). The polypeptide is DNA-directed RNA polymerase subunit epsilon (Geobacillus thermodenitrificans (strain NG80-2)).